The following is a 183-amino-acid chain: Helofensin-2 (183 aa).

Positions 1–26 are cleaved as a signal peptide; the sequence is MQMDWLFIAVISGIGLLSSGVPGTQG. Residues 27–64 form a C(6)C(4)C(9)C(6)CC 1; approximate repeat; sequence AYTTEQCRALNGSCNFYACFPKNVIIGKCDWWGWSCCA. The C(6)C(4)C(9)C(6)CC 2; approximate repeat unit spans residues 65–101; it reads RTPLERCTAKKGTCTKTGCTKTDTDHGPCDGGAQCCQ. A C(6)C(4)C(9)C(6)CC 3; approximate repeat occupies 102–139; the sequence is RDPVKYCKFHGNVCGRGKCPMDHIPIGEQCMPGYPCCK. The stretch at 140–177 is one C(6)C(4)C(9)C(6)CC 4; approximate repeat; it reads RDGPAYCKSKGGKCLRRCSQIVPTDIIGVCADGVPCCK.

Belongs to the beta-defensin family. Helofensin subfamily. Expressed by the mandibular venom gland.

Its subcellular location is the secreted. Its function is as follows. Lethal toxin which possesses an inhibitory effect on direct electrical stimulation of the isolated hemi-diaphragm of mice. Neither hemorrhagic nor hemolytic activities are detected. Phospholipase A2 activity, proteolytic activity and arginine esterolytic activity are absent. The chain is Helofensin-2 from Heloderma suspectum cinctum (Banded Gila monster).